The chain runs to 85 residues: Small ribosomal subunit protein uS17 (85 aa).

Belongs to the universal ribosomal protein uS17 family. Part of the 30S ribosomal subunit.

One of the primary rRNA binding proteins, it binds specifically to the 5'-end of 16S ribosomal RNA. This chain is Small ribosomal subunit protein uS17, found in Mycoplasmoides gallisepticum (strain R(low / passage 15 / clone 2)) (Mycoplasma gallisepticum).